Consider the following 152-residue polypeptide: UPF0735 ACT domain-containing protein CTC_00116 (152 aa).

The region spanning 76-151 (IISVTLNHRP…NVIKLDLIAM (76 aa)) is the ACT domain.

It belongs to the UPF0735 family.

This Clostridium tetani (strain Massachusetts / E88) protein is UPF0735 ACT domain-containing protein CTC_00116.